Consider the following 272-residue polypeptide: MIKVSDVCFSYTNNMDQLVLKNINVVFEKGKYYAILGHNGSGKSTFSKILSGIFKPQKGSIEVDGVLLNKENLTKIRKKIGIIFQNPDNQFVGATVEDDIAFSLENINEDPKKMSQIIANLAAKVQMESYLDREPQFLSGGQKQRVAIASVLALNPEIIIFDEITSMLDPRGKYDVVKILDDLRKDKTKTLISITHNMNEAILADEIIVFANGGIIAQGDPKLILNDKNIIEKAKIDSPFIYKISSALKLVSPTYDENELLEQLWKLKQKTS.

One can recognise an ABC transporter domain in the interval 2-237 (IKVSDVCFSY…KNIIEKAKID (236 aa)). ATP is bound at residue 37–44 (GHNGSGKS).

It belongs to the ABC transporter superfamily. Energy-coupling factor EcfA family. As to quaternary structure, forms a stable energy-coupling factor (ECF) transporter complex composed of 2 membrane-embedded substrate-binding proteins (S component), 2 ATP-binding proteins (A component) and 2 transmembrane proteins (T component).

Its subcellular location is the cell membrane. In terms of biological role, ATP-binding (A) component of a common energy-coupling factor (ECF) ABC-transporter complex. Unlike classic ABC transporters this ECF transporter provides the energy necessary to transport a number of different substrates. This is Energy-coupling factor transporter ATP-binding protein EcfA1 from Mesomycoplasma hyopneumoniae (strain 7448) (Mycoplasma hyopneumoniae).